The chain runs to 323 residues: Annexin A3 (323 aa).

Residue Ala-2 is modified to N-acetylalanine. Annexin repeat units follow at residues 18-89 (FNPS…ALVT), 90-161 (PPAV…ILAN), 173-245 (QLAR…AIVR), and 249-320 (NTPA…KICG). Position 177 is an N6-acetyllysine (Lys-177). A Phosphothreonine modification is found at Thr-267.

It belongs to the annexin family.

Functionally, inhibitor of phospholipase A2, also possesses anti-coagulant properties. Also cleaves the cyclic bond of inositol 1,2-cyclic phosphate to form inositol 1-phosphate. The sequence is that of Annexin A3 (ANXA3) from Bos taurus (Bovine).